The sequence spans 172 residues: Transcriptional repressor NrdR (172 aa).

A zinc finger lies at 3-34 (CPYCRNTDTRVLDSRVADDGGSIRRRRTCSAC). One can recognise an ATP-cone domain in the interval 46-136 (LTVLKRSGAS…VYRAFESADD (91 aa)).

It belongs to the NrdR family. Requires Zn(2+) as cofactor.

Its function is as follows. Negatively regulates transcription of bacterial ribonucleotide reductase nrd genes and operons by binding to NrdR-boxes. This is Transcriptional repressor NrdR from Nocardioides sp. (strain ATCC BAA-499 / JS614).